We begin with the raw amino-acid sequence, 427 residues long: Histidine--tRNA ligase (427 aa).

Belongs to the class-II aminoacyl-tRNA synthetase family. In terms of assembly, homodimer.

It is found in the cytoplasm. The catalysed reaction is tRNA(His) + L-histidine + ATP = L-histidyl-tRNA(His) + AMP + diphosphate + H(+). This Corynebacterium urealyticum (strain ATCC 43042 / DSM 7109) protein is Histidine--tRNA ligase.